Consider the following 222-residue polypeptide: MSVAIVRFPGTNCEFDTQYAFSLFGGVTYIVWHQDKSLPTDCHLVVIPGGFSYGDYLRCGAIAQFSPIMRVIKDFALQGGYVLGICNGFQILCEAGLLPGALKRNINLHFISQMQSLRIVSKNNAFLRSYAPNQEIRLPIAHADGNYFIDERELLELRANEQILLEYTDNPNGSVDSIAGICNEKKNVFGLMPHPERAIEDMLGSCDGKAMLDNLLHIAEMK.

The region spanning 2–222 (SVAIVRFPGT…DNLLHIAEMK (221 aa)) is the Glutamine amidotransferase type-1 domain. The Nucleophile role is filled by Cys86. Residues His194 and Glu196 contribute to the active site.

As to quaternary structure, part of the FGAM synthase complex composed of 1 PurL, 1 PurQ and 2 PurS subunits.

The protein localises to the cytoplasm. It catalyses the reaction N(2)-formyl-N(1)-(5-phospho-beta-D-ribosyl)glycinamide + L-glutamine + ATP + H2O = 2-formamido-N(1)-(5-O-phospho-beta-D-ribosyl)acetamidine + L-glutamate + ADP + phosphate + H(+). The catalysed reaction is L-glutamine + H2O = L-glutamate + NH4(+). The protein operates within purine metabolism; IMP biosynthesis via de novo pathway; 5-amino-1-(5-phospho-D-ribosyl)imidazole from N(2)-formyl-N(1)-(5-phospho-D-ribosyl)glycinamide: step 1/2. Functionally, part of the phosphoribosylformylglycinamidine synthase complex involved in the purines biosynthetic pathway. Catalyzes the ATP-dependent conversion of formylglycinamide ribonucleotide (FGAR) and glutamine to yield formylglycinamidine ribonucleotide (FGAM) and glutamate. The FGAM synthase complex is composed of three subunits. PurQ produces an ammonia molecule by converting glutamine to glutamate. PurL transfers the ammonia molecule to FGAR to form FGAM in an ATP-dependent manner. PurS interacts with PurQ and PurL and is thought to assist in the transfer of the ammonia molecule from PurQ to PurL. This Helicobacter hepaticus (strain ATCC 51449 / 3B1) protein is Phosphoribosylformylglycinamidine synthase subunit PurQ.